Here is a 227-residue protein sequence, read N- to C-terminus: Cytochrome c oxidase subunit 2 (227 aa).

The Mitochondrial intermembrane portion of the chain corresponds to 1 to 14 (MAYPFQLGLQDATS). The helical transmembrane segment at 15-45 (PIMEELMNFHDHTLMIVFLISSLVLYIISLM) threads the bilayer. The Mitochondrial matrix segment spans residues 46 to 59 (LTTKLTHTSTMDAQ). Residues 60–87 (EVETIWTILPAVILILIALPSLRILYMM) form a helical membrane-spanning segment. The Mitochondrial intermembrane portion of the chain corresponds to 88–227 (DEINNPVLTV…NFENWSTSMI (140 aa)). Positions 161, 196, 198, 200, 204, and 207 each coordinate Cu cation. A Mg(2+)-binding site is contributed by E198.

Belongs to the cytochrome c oxidase subunit 2 family. Component of the cytochrome c oxidase (complex IV, CIV), a multisubunit enzyme composed of 14 subunits. The complex is composed of a catalytic core of 3 subunits MT-CO1, MT-CO2 and MT-CO3, encoded in the mitochondrial DNA, and 11 supernumerary subunits COX4I, COX5A, COX5B, COX6A, COX6B, COX6C, COX7A, COX7B, COX7C, COX8 and NDUFA4, which are encoded in the nuclear genome. The complex exists as a monomer or a dimer and forms supercomplexes (SCs) in the inner mitochondrial membrane with NADH-ubiquinone oxidoreductase (complex I, CI) and ubiquinol-cytochrome c oxidoreductase (cytochrome b-c1 complex, complex III, CIII), resulting in different assemblies (supercomplex SCI(1)III(2)IV(1) and megacomplex MCI(2)III(2)IV(2)). Found in a complex with TMEM177, COA6, COX18, COX20, SCO1 and SCO2. Interacts with TMEM177 in a COX20-dependent manner. Interacts with COX20. Interacts with COX16. Cu cation serves as cofactor.

The protein resides in the mitochondrion inner membrane. It carries out the reaction 4 Fe(II)-[cytochrome c] + O2 + 8 H(+)(in) = 4 Fe(III)-[cytochrome c] + 2 H2O + 4 H(+)(out). Its function is as follows. Component of the cytochrome c oxidase, the last enzyme in the mitochondrial electron transport chain which drives oxidative phosphorylation. The respiratory chain contains 3 multisubunit complexes succinate dehydrogenase (complex II, CII), ubiquinol-cytochrome c oxidoreductase (cytochrome b-c1 complex, complex III, CIII) and cytochrome c oxidase (complex IV, CIV), that cooperate to transfer electrons derived from NADH and succinate to molecular oxygen, creating an electrochemical gradient over the inner membrane that drives transmembrane transport and the ATP synthase. Cytochrome c oxidase is the component of the respiratory chain that catalyzes the reduction of oxygen to water. Electrons originating from reduced cytochrome c in the intermembrane space (IMS) are transferred via the dinuclear copper A center (CU(A)) of subunit 2 and heme A of subunit 1 to the active site in subunit 1, a binuclear center (BNC) formed by heme A3 and copper B (CU(B)). The BNC reduces molecular oxygen to 2 water molecules using 4 electrons from cytochrome c in the IMS and 4 protons from the mitochondrial matrix. The chain is Cytochrome c oxidase subunit 2 (MT-CO2) from Apodemus mystacinus (Broad-toothed field mouse).